The chain runs to 287 residues: L-ascorbate peroxidase 3 (287 aa).

A2 bears the N-acetylalanine mark. The Proton acceptor role is filled by H40. The interval 46-66 (DAQSKTGGPNGSIRNEEEHTH) is disordered. Position 160 (H160) interacts with heme b. K(+)-binding residues include T161, T177, and D184. The chain crosses the membrane as a helical span at residues 259 to 279 (ILAQSAFGVAVAAAVVAFGYF). The short motif at 281–287 (EIRKRMK) is the AKR2A-binding sequence (ABS) required for peroxisome membrane targeting element.

Belongs to the peroxidase family. Ascorbate peroxidase subfamily. As to quaternary structure, interacts via its C-terminal region with AKR2A and AKR2B. Heme b serves as cofactor.

Its subcellular location is the peroxisome membrane. It is found in the glyoxysome membrane. It catalyses the reaction L-ascorbate + H2O2 = L-dehydroascorbate + 2 H2O. Its function is as follows. Plays a key role in hydrogen peroxide removal. In Arabidopsis thaliana (Mouse-ear cress), this protein is L-ascorbate peroxidase 3 (APX3).